The following is a 161-amino-acid chain: RNA pyrophosphohydrolase (161 aa).

Residues 12–154 form the Nudix hydrolase domain; the sequence is PYRPGVGMMI…KRKLYQAVVK (143 aa). The Nudix box motif lies at 46 to 67; sequence GGIVPGETPSIAAMREMLEEIG.

Belongs to the Nudix hydrolase family. RppH subfamily. Requires a divalent metal cation as cofactor.

Accelerates the degradation of transcripts by removing pyrophosphate from the 5'-end of triphosphorylated RNA, leading to a more labile monophosphorylated state that can stimulate subsequent ribonuclease cleavage. This is RNA pyrophosphohydrolase from Rickettsia canadensis (strain McKiel).